Consider the following 260-residue polypeptide: Cytochrome c oxidase subunit 2 (260 aa).

Topologically, residues 1–43 (MILRLLECRFFTIALCDAAEPWQLGFQDAATPMMQGIIDLHHD) are mitochondrial intermembrane. Residues 44 to 64 (IFFFLILILVFVLWMLVRALW) form a helical membrane-spanning segment. Topologically, residues 65 to 84 (HFNEQTNPIPQRIVHGTTIE) are mitochondrial matrix. Residues 85–105 (IIWTIFPSVILLFIAIPSFAL) traverse the membrane as a helical segment. The Mitochondrial intermembrane segment spans residues 106 to 260 (LYSMDGVLVD…VSNQLILQTN (155 aa)). Positions 189, 224, 226, 228, 232, and 235 each coordinate Cu cation. Glutamate 226 provides a ligand contact to Mg(2+).

It belongs to the cytochrome c oxidase subunit 2 family. As to quaternary structure, component of the cytochrome c oxidase (complex IV, CIV), a multisubunit enzyme composed of a catalytic core of 3 subunits and several supernumerary subunits. The complex exists as a monomer or a dimer and forms supercomplexes (SCs) in the inner mitochondrial membrane with ubiquinol-cytochrome c oxidoreductase (cytochrome b-c1 complex, complex III, CIII). Cu cation is required as a cofactor.

Its subcellular location is the mitochondrion inner membrane. The enzyme catalyses 4 Fe(II)-[cytochrome c] + O2 + 8 H(+)(in) = 4 Fe(III)-[cytochrome c] + 2 H2O + 4 H(+)(out). In terms of biological role, component of the cytochrome c oxidase, the last enzyme in the mitochondrial electron transport chain which drives oxidative phosphorylation. The respiratory chain contains 3 multisubunit complexes succinate dehydrogenase (complex II, CII), ubiquinol-cytochrome c oxidoreductase (cytochrome b-c1 complex, complex III, CIII) and cytochrome c oxidase (complex IV, CIV), that cooperate to transfer electrons derived from NADH and succinate to molecular oxygen, creating an electrochemical gradient over the inner membrane that drives transmembrane transport and the ATP synthase. Cytochrome c oxidase is the component of the respiratory chain that catalyzes the reduction of oxygen to water. Electrons originating from reduced cytochrome c in the intermembrane space (IMS) are transferred via the dinuclear copper A center (CU(A)) of subunit 2 and heme A of subunit 1 to the active site in subunit 1, a binuclear center (BNC) formed by heme A3 and copper B (CU(B)). The BNC reduces molecular oxygen to 2 water molecules using 4 electrons from cytochrome c in the IMS and 4 protons from the mitochondrial matrix. The chain is Cytochrome c oxidase subunit 2 (COX2) from Zea mays (Maize).